Here is a 502-residue protein sequence, read N- to C-terminus: ATP synthase subunit alpha (502 aa).

Position 169-176 (169-176) interacts with ATP; the sequence is GDRQTGKT.

This sequence belongs to the ATPase alpha/beta chains family. As to quaternary structure, F-type ATPases have 2 components, CF(1) - the catalytic core - and CF(0) - the membrane proton channel. CF(1) has five subunits: alpha(3), beta(3), gamma(1), delta(1), epsilon(1). CF(0) has three main subunits: a(1), b(2) and c(9-12). The alpha and beta chains form an alternating ring which encloses part of the gamma chain. CF(1) is attached to CF(0) by a central stalk formed by the gamma and epsilon chains, while a peripheral stalk is formed by the delta and b chains.

Its subcellular location is the cell inner membrane. The catalysed reaction is ATP + H2O + 4 H(+)(in) = ADP + phosphate + 5 H(+)(out). In terms of biological role, produces ATP from ADP in the presence of a proton gradient across the membrane. The alpha chain is a regulatory subunit. In Geobacter sp. (strain M21), this protein is ATP synthase subunit alpha.